The chain runs to 29 residues: Histone H2B (29 aa).

The segment at 1–29 is disordered; it reads MPEPAKSAPKKGSTRTAAKGGKKRRKSRK. N6-acetyllysine is present on residues lysine 6 and lysine 11. Phosphoserine is present on serine 13. Basic residues predominate over residues 20 to 29; the sequence is GGKKRRKSRK.

Belongs to the histone H2B family. The nucleosome is a histone octamer containing two molecules each of H2A, H2B, H3 and H4 assembled in one H3-H4 heterotetramer and two H2A-H2B heterodimers. The octamer wraps approximately 147 bp of DNA. Post-translationally, monoubiquitination at the C-terminal Lys gives a specific tag for epigenetic transcriptional activation and is also prerequisite for histone H3 'Lys-4' and 'Lys-79' methylation. In terms of processing, phosphorylated during apoptosis; which facilitates apoptotic chromatin condensation.

It localises to the nucleus. The protein resides in the chromosome. Core component of nucleosome. Nucleosomes wrap and compact DNA into chromatin, limiting DNA accessibility to the cellular machineries which require DNA as a template. Histones thereby play a central role in transcription regulation, DNA repair, DNA replication and chromosomal stability. DNA accessibility is regulated via a complex set of post-translational modifications of histones, also called histone code, and nucleosome remodeling. The chain is Histone H2B from Cyprinus carpio (Common carp).